The following is a 1291-amino-acid chain: Ethylene-insensitive protein 2.2 (1291 aa).

6 consecutive transmembrane segments (helical) span residues 18 to 38 (ALPALGPGLLIAIGYVDPGKW), 48 to 68 (FGFDLVLPMLIFNFVAILCQY), 96 to 116 (FLGVQAALSVIALDLTMILGI), 128 to 148 (LSTCVFLAAVDAVLFPVFATL), 155 to 175 (SFLSTCIAGFLLLLYFFGVLI), and 195 to 215 (SAFALMSLLGASIMPHNFFLH). N227 carries N-linked (GlcNAc...) asparagine glycosylation. A run of 7 helical transmembrane segments spans residues 231–251 (GALCLNHFFAILCIFSGIYLV), 253–273 (YVLMNSAANVFYSTGLVLLTF), 288–308 (VALCVFSLILFFANHITALTW), 335–355 (IIAVVPALYCVWTSGVEGIYQ), 356–376 (LLIFTQVMVALLLPSSVIPLF), 393–413 (FLEFLALISFMGMLGIKIIFV), and 441–461 (VLLITACSSFCLMLWLAATPL). Residues 498 to 518 (TEEESIGGQEQLSGPGKSAES) are disordered. N-linked (GlcNAc...) asparagine glycosylation occurs at N550. Residues 614 to 662 (AEKEDDEGDSWEPEESSKGVPGSTSSLTSDGPGSFRSLSGKSDEGGNGA) form a disordered region. Acidic residues predominate over residues 617–627 (EDDEGDSWEPE). Polar residues predominate over residues 635–653 (GSTSSLTSDGPGSFRSLSG). Phosphoserine occurs at positions 647 and 664. Disordered stretches follow at residues 742 to 768 (QIHSSLGDSPNHLRVPSNIDSSYGGQR) and 787 to 808 (GPSRSIADSSERRYSSVHTLPS). Over residues 759 to 768 (NIDSSYGGQR) the composition is skewed to polar residues. T818 is modified (phosphothreonine). The tract at residues 836 to 856 (GSSSLNGQMDSPAPISPSLGP) is disordered. Residue N891 is glycosylated (N-linked (GlcNAc...) asparagine). S923 bears the Phosphoserine mark. N-linked (GlcNAc...) asparagine glycosylation is present at N1027. The segment at 1210-1229 (HRSSPPVSNGMLPPASKPGR) is disordered. A Nuclear localization signal motif is present at residues 1262-1269 (DVAFPKGK).

Belongs to the NRAMP (TC 2.A.55) family.

The protein localises to the endoplasmic reticulum membrane. The protein resides in the nucleus. It is found in the cytoplasm. In terms of biological role, central factor in signaling pathways regulated by ethylene (ET) and involved in various processes including development, plant defense, senescence, nucleotide sugar flux, and tropisms. Trafficking signal inducing ethylene response. The nuclear localization is both necessary and sufficient to activate EIN3-mediated transcription and ethylene responses. This Populus trichocarpa (Western balsam poplar) protein is Ethylene-insensitive protein 2.2.